A 265-amino-acid polypeptide reads, in one-letter code: RNA-binding protein 7 (265 aa).

Residue glycine 2 is modified to N-acetylglycine. Residues 10 to 87 enclose the RRM domain; it reads RTLFVGNLET…RPIKIQFRSG (78 aa). ZCCHC8 binding stretches follow at residues 25–35 and 59–76; these read LLFELFHQAGP and HEVSVPYAMNLLNGIKLF. The disordered stretch occupies residues 91–125; it reads ASQDASVSYPQHHVGNLSPTSTSPNSYERTVGNVS. A compositionally biased stretch (polar residues) spans 107 to 125; it reads LSPTSTSPNSYERTVGNVS. Serine 136 is modified (phosphoserine; by MAPKAPK2). Serine 137 is subject to Phosphoserine. The residue at position 152 (arginine 152) is an Omega-N-methylarginine. Disordered stretches follow at residues 166–224 and 237–265; these read DQLG…HGSD and DDRNHDGWSHDYDNRRDSSRGGKWPSSRH. The span at 170 to 196 shows a compositional bias: polar residues; the sequence is FSPSAQPHGHTFNQSSSSQWRQDALSS. Serine 203 is subject to Phosphoserine. Composition is skewed to basic and acidic residues over residues 207-224 and 237-256; these read LADRHYSREQRYSDHGSD and DDRNHDGWSHDYDNRRDSSR.

Component of the nuclear exosome targeting (NEXT) complex composed of MTREX, ZCCHC8, and RBM7 that directs a subset of non-coding short-lived RNAs for exosomal degradation. Interacts with ZCCHC8 and SF3B2/SAP145. Binds to MTREX through ZCCHC8. Interacts with YWHAE and YWHAZ; these interactions are stress-dependent and RBM7 phosphorylation dependent; release RNA from the NEXT complex and may affect RNA targeting to the nuclear RNA exosomome for degradation. Interacts with MEPCE and LARP7, the core subunits of 7SK snRNP; upon genotoxic stress this interaction is enhanced, triggering the release of inactive P-TEFb complex from the core and P-TEFb complex activation. In terms of processing, phosphorylated at Ser-136 by MAPK14/p38-alpha-activated MAPKAPK2/MK2; this phosphorylation is stress-dependent; this phosphorylation decreases its RNA-binding capacity therefore affecting RNA nuclear exosome-mediated degradation. This phosphorylation mediates YWHAE and YWHAZ interactions.

The protein localises to the nucleus. It localises to the nucleoplasm. In terms of biological role, RNA-binding subunit of the trimeric nuclear exosome targeting (NEXT) complex, a complex that functions as an RNA exosome cofactor that directs a subset of non-coding short-lived RNAs for exosomal degradation. NEXT is involved in surveillance and turnover of aberrant transcripts and non-coding RNAs. Binds preferentially polyuridine sequences and associates with newly synthesized RNAs, including pre-mRNAs and short-lived exosome substrates such as promoter upstream transcripts (PROMPTs), enhancer RNAs (eRNAs), and 3'-extended products from small nuclear RNAs (snRNAs). Participates in several biological processes including DNA damage response (DDR) and stress response. During stress response, activation of the p38MAPK-MK2 pathway decreases RBM7-RNA-binding and subsequently the RNA exosome degradation activities, thereby modulating the turnover of non-coding transcriptome. Participates in DNA damage response (DDR), through its interaction with MEPCE and LARP7, the core subunits of 7SK snRNP complex, that release the positive transcription elongation factor b (P-TEFb) complex from the 7SK snRNP. In turn, activation of P-TEFb complex induces the transcription of P-TEFb-dependent DDR genes to promote cell viability. This is RNA-binding protein 7 from Mus musculus (Mouse).